Consider the following 61-residue polypeptide: Large ribosomal subunit protein uL30 (61 aa).

The protein belongs to the universal ribosomal protein uL30 family. As to quaternary structure, part of the 50S ribosomal subunit.

This Chromohalobacter salexigens (strain ATCC BAA-138 / DSM 3043 / CIP 106854 / NCIMB 13768 / 1H11) protein is Large ribosomal subunit protein uL30.